Consider the following 431-residue polypeptide: C4-dicarboxylate transport protein (431 aa).

8 helical membrane passes run 8–28 (ILYV…HFWP), 44–64 (LIKM…IAGM), 78–98 (LLYF…AAHL), 148–168 (GDIL…AAIG), 188–208 (IVHV…AFTI), 222–242 (LIGT…GAIA), 307–327 (IYMT…LTLL), and 355–375 (AATL…ILGI).

The protein belongs to the dicarboxylate/amino acid:cation symporter (DAACS) (TC 2.A.23) family.

The protein resides in the cell inner membrane. Functionally, responsible for the transport of dicarboxylates such as succinate, fumarate, and malate from the periplasm across the membrane. The sequence is that of C4-dicarboxylate transport protein from Cupriavidus pinatubonensis (strain JMP 134 / LMG 1197) (Cupriavidus necator (strain JMP 134)).